A 100-amino-acid polypeptide reads, in one-letter code: uncharacterized protein (100 aa).

Residues 78–100 (KPYRTESGTSSSNRMMLPPRQHV) are disordered.

This is an uncharacterized protein from Caenorhabditis elegans.